The chain runs to 245 residues: MSQSTSVLRRNGFTFKQFFVAHDRCAMKAGTDGILLGAWAPVAGVKRCLDIGAGSGLLALMLAQRTSDSVIIDAVELESEAATQAQENVAQSPWLERINVHTADIQQWVTQQTARFDLIISNPPYYEQGVECATPQREQARYTTSLDHQTLLTCAAECITEEGFFCVVLPEQIGNSFTELALSMGWHLRLRTDVAENEARLPHRVLLAFSPQAGECFSDRLVIRGPDQNYSEAYTALTQAFYLFM.

Belongs to the methyltransferase superfamily. tRNA (adenine-N(6)-)-methyltransferase family.

It localises to the cytoplasm. The enzyme catalyses adenosine(37) in tRNA1(Val) + S-adenosyl-L-methionine = N(6)-methyladenosine(37) in tRNA1(Val) + S-adenosyl-L-homocysteine + H(+). Its function is as follows. Specifically methylates the adenine in position 37 of tRNA(1)(Val) (anticodon cmo5UAC). This chain is tRNA1(Val) (adenine(37)-N6)-methyltransferase, found in Escherichia coli O157:H7 (strain EC4115 / EHEC).